A 173-amino-acid polypeptide reads, in one-letter code: Mesencephalic astrocyte-derived neurotrophic factor homolog (173 aa).

The first 22 residues, 1–22 (MKTWHMVVVIGFLATLAQTSLA), serve as a signal peptide directing secretion. Disulfide bonds link Cys-28–Cys-114, Cys-31–Cys-103, Cys-61–Cys-72, and Cys-148–Cys-151.

Belongs to the ARMET family.

The protein localises to the secreted. Functionally, required during the maturation of the embryonic nervous system for maintenance of neuronal and cuticular connectivity. Essential for maintenance of dopaminergic neurons and dopamine levels. This chain is Mesencephalic astrocyte-derived neurotrophic factor homolog, found in Drosophila simulans (Fruit fly).